Consider the following 250-residue polypeptide: 2,3-bisphosphoglycerate-dependent phosphoglycerate mutase (250 aa).

Substrate contacts are provided by residues 10-17 (RHGESEWN), 23-24 (TG), Arg-62, 89-92 (ERHY), Lys-100, 116-117 (RR), and 185-186 (GN). His-11 acts as the Tele-phosphohistidine intermediate in catalysis. Glu-89 serves as the catalytic Proton donor/acceptor.

This sequence belongs to the phosphoglycerate mutase family. BPG-dependent PGAM subfamily. As to quaternary structure, homodimer.

It carries out the reaction (2R)-2-phosphoglycerate = (2R)-3-phosphoglycerate. It participates in carbohydrate degradation; glycolysis; pyruvate from D-glyceraldehyde 3-phosphate: step 3/5. In terms of biological role, catalyzes the interconversion of 2-phosphoglycerate and 3-phosphoglycerate. The sequence is that of 2,3-bisphosphoglycerate-dependent phosphoglycerate mutase from Edwardsiella ictaluri (strain 93-146).